We begin with the raw amino-acid sequence, 62 residues long: UPF0434 protein RHE_CH03977 (62 aa).

This sequence belongs to the UPF0434 family.

The protein is UPF0434 protein RHE_CH03977 of Rhizobium etli (strain ATCC 51251 / DSM 11541 / JCM 21823 / NBRC 15573 / CFN 42).